Consider the following 638-residue polypeptide: 1-deoxy-D-xylulose-5-phosphate synthase (638 aa).

Thiamine diphosphate-binding positions include His-79 and 120–122 (GHS). Asp-151 contacts Mg(2+). Residues 152–153 (GA), Asn-182, Tyr-291, and Glu-373 each bind thiamine diphosphate. A Mg(2+)-binding site is contributed by Asn-182.

This sequence belongs to the transketolase family. DXPS subfamily. In terms of assembly, homodimer. Mg(2+) is required as a cofactor. The cofactor is thiamine diphosphate.

It catalyses the reaction D-glyceraldehyde 3-phosphate + pyruvate + H(+) = 1-deoxy-D-xylulose 5-phosphate + CO2. It participates in metabolic intermediate biosynthesis; 1-deoxy-D-xylulose 5-phosphate biosynthesis; 1-deoxy-D-xylulose 5-phosphate from D-glyceraldehyde 3-phosphate and pyruvate: step 1/1. In terms of biological role, catalyzes the acyloin condensation reaction between C atoms 2 and 3 of pyruvate and glyceraldehyde 3-phosphate to yield 1-deoxy-D-xylulose-5-phosphate (DXP). The polypeptide is 1-deoxy-D-xylulose-5-phosphate synthase (Xanthomonas euvesicatoria pv. vesicatoria (strain 85-10) (Xanthomonas campestris pv. vesicatoria)).